The following is a 185-amino-acid chain: 4-nitrophenol 4-monooxygenase/4-nitrocatechol 2-monooxygenase, reductase component (185 aa).

The protein belongs to the non-flavoprotein flavin reductase family. The 4-NP/4-NCA monooxygenase is composed of an oxygenase component NpcA and a reductase component NpcB.

It catalyses the reaction 4-nitrophenol + NADH + O2 + H(+) = 4-nitrocatechol + NAD(+) + H2O. The enzyme catalyses 4-nitrocatechol + NADPH + O2 = 2-hydroxy-1,4-benzoquinone + nitrite + NADP(+) + H2O. It carries out the reaction 4-nitrocatechol + NADH + O2 = 2-hydroxy-1,4-benzoquinone + nitrite + NAD(+) + H2O. It functions in the pathway aromatic compound metabolism. Its pathway is xenobiotic degradation. Its activity is regulated as follows. Inhibited by methimazole. Its function is as follows. Involved in the degradation of para-nitrophenol (4-NP). Catalyzes both the initial hydroxylation of 4-NP to produce 4-nitrocatechol (4-NCA) and the subsequent oxidative release of the nitro group from 4-NCA to produce 2-hydroxy-1,4-benzoquinone. It can also use 4-nitroresorcinol as substrate with a rate of nitrite release similar to that observed with the two physiological substrates, 4-PN and 4-NCA. This is 4-nitrophenol 4-monooxygenase/4-nitrocatechol 2-monooxygenase, reductase component (npcB) from Rhodococcus opacus (Nocardia opaca).